The chain runs to 569 residues: Proline--tRNA ligase (569 aa).

Belongs to the class-II aminoacyl-tRNA synthetase family. ProS type 1 subfamily. Homodimer.

Its subcellular location is the cytoplasm. The enzyme catalyses tRNA(Pro) + L-proline + ATP = L-prolyl-tRNA(Pro) + AMP + diphosphate. Its function is as follows. Catalyzes the attachment of proline to tRNA(Pro) in a two-step reaction: proline is first activated by ATP to form Pro-AMP and then transferred to the acceptor end of tRNA(Pro). As ProRS can inadvertently accommodate and process non-cognate amino acids such as alanine and cysteine, to avoid such errors it has two additional distinct editing activities against alanine. One activity is designated as 'pretransfer' editing and involves the tRNA(Pro)-independent hydrolysis of activated Ala-AMP. The other activity is designated 'posttransfer' editing and involves deacylation of mischarged Ala-tRNA(Pro). The misacylated Cys-tRNA(Pro) is not edited by ProRS. This Campylobacter jejuni subsp. doylei (strain ATCC BAA-1458 / RM4099 / 269.97) protein is Proline--tRNA ligase.